Consider the following 608-residue polypeptide: Chaperone protein DnaK (608 aa).

The residue at position 174 (Thr-174) is a Phosphothreonine; by autocatalysis. Positions 493–505 (YEEEDRKRKESAE) are enriched in basic and acidic residues. 2 disordered regions span residues 493-514 (YEEE…DSMV) and 577-608 (GQAA…DDDK). Positions 577–590 (GQAAGANPGAQTTG) are enriched in low complexity. Residues 599 to 608 (AEYKVVDDDK) are compositionally biased toward basic and acidic residues.

Belongs to the heat shock protein 70 family.

Its function is as follows. Acts as a chaperone. The sequence is that of Chaperone protein DnaK from Acetivibrio thermocellus (strain ATCC 27405 / DSM 1237 / JCM 9322 / NBRC 103400 / NCIMB 10682 / NRRL B-4536 / VPI 7372) (Clostridium thermocellum).